Consider the following 490-residue polypeptide: Lysine--tRNA ligase (490 aa).

Mg(2+) is bound by residues E398 and E405.

This sequence belongs to the class-II aminoacyl-tRNA synthetase family. Homodimer. The cofactor is Mg(2+).

The protein localises to the cytoplasm. It catalyses the reaction tRNA(Lys) + L-lysine + ATP = L-lysyl-tRNA(Lys) + AMP + diphosphate. In Metamycoplasma arthritidis (strain 158L3-1) (Mycoplasma arthritidis), this protein is Lysine--tRNA ligase.